The primary structure comprises 297 residues: 4-hydroxy-tetrahydrodipicolinate synthase (297 aa).

Thr47 serves as a coordination point for pyruvate. Tyr135 functions as the Proton donor/acceptor in the catalytic mechanism. Lys163 acts as the Schiff-base intermediate with substrate in catalysis. Position 205 (Ile205) interacts with pyruvate.

Belongs to the DapA family. As to quaternary structure, homotetramer; dimer of dimers.

Its subcellular location is the cytoplasm. It catalyses the reaction L-aspartate 4-semialdehyde + pyruvate = (2S,4S)-4-hydroxy-2,3,4,5-tetrahydrodipicolinate + H2O + H(+). Its pathway is amino-acid biosynthesis; L-lysine biosynthesis via DAP pathway; (S)-tetrahydrodipicolinate from L-aspartate: step 3/4. Catalyzes the condensation of (S)-aspartate-beta-semialdehyde [(S)-ASA] and pyruvate to 4-hydroxy-tetrahydrodipicolinate (HTPA). This chain is 4-hydroxy-tetrahydrodipicolinate synthase, found in Dehalococcoides mccartyi (strain CBDB1).